Consider the following 405-residue polypeptide: Mucosal addressin cell adhesion molecule 1 (405 aa).

The signal sequence occupies residues 1–21 (MESILALLLALALVPYQLSRG). 2 Ig-like domains span residues 22–109 (QSFQ…ILVY) and 110–227 (AFPD…TSPK). Residues 22–364 (QSFQVNPPES…PGQVTPNSSS (343 aa)) are Extracellular-facing. 3 disulfides stabilise this stretch: C45–C91, C49–C95, and C132–C200. The tract at residues 221–257 (QSQTSPKPPNTTSAEPYILTSSSTAEAVSTGLNITTL) is mucin-like. N230 and N253 each carry an N-linked (GlcNAc...) asparagine glycan. A disordered region spans residues 255-275 (TTLPSAPPYPKLSPRTLSSEG). Residues 258 to 357 (PSAPPYPKLS…EVTNLYVPGQ (100 aa)) enclose the Ig-like 3 domain. Residues C293 and C341 are joined by a disulfide bond. N361 carries N-linked (GlcNAc...) asparagine glycosylation. Residues 365–385 (TVVLWIGSLVLGLLALVFLAY) form a helical membrane-spanning segment. Topologically, residues 386 to 405 (RLWKCYRPGPRPDTSSCTHL) are cytoplasmic.

In terms of assembly, homodimer. In terms of processing, O-glycosylated; contains syalic acid. The Ser/Thr-rich mucin-like domain may provide possible sites for O-glycosylation. As to expression, highly expressed on high endothelial venules (HEV) of organized intestinal lymphoid tissues like the Peyer patches and mesenteric lymph nodes, and in the lamina propria of the intestine. Some expression found in the spleen, and low levels of expression in the peripheral lymph nodes and the lactating mammary gland. No expression was detected in the liver, kidneys, lungs or in normal brain. Expressed as well in brain endothelioma cells, and mucosal tissues which are in a chronic state of inflammation, such as inflamed pancreas.

Its subcellular location is the membrane. In terms of biological role, cell adhesion leukocyte receptor expressed by mucosal venules, helps to direct lymphocyte traffic into mucosal tissues including the Peyer patches and the intestinal lamina propria. It can bind both the integrin alpha-4/beta-7 and L-selectin, regulating both the passage and retention of leukocytes. Both isoform 1 and isoform 2 can adhere to integrin alpha-4/beta-7. Isoform 2, lacking the mucin-like domain, may be specialized in supporting integrin alpha-4/beta-7-dependent adhesion strengthening, independent of L-selectin binding. The chain is Mucosal addressin cell adhesion molecule 1 (Madcam1) from Mus musculus (Mouse).